We begin with the raw amino-acid sequence, 266 residues long: Glucosamine-6-phosphate deaminase (266 aa).

Asp-72 (proton acceptor; for enolization step) is an active-site residue. The active-site For ring-opening step is Asp-141. Residue His-143 is the Proton acceptor; for ring-opening step of the active site. Glu-148 (for ring-opening step) is an active-site residue.

Belongs to the glucosamine/galactosamine-6-phosphate isomerase family. NagB subfamily. As to quaternary structure, homohexamer; trimer of disulfide-linked dimers.

The enzyme catalyses alpha-D-glucosamine 6-phosphate + H2O = beta-D-fructose 6-phosphate + NH4(+). Its pathway is amino-sugar metabolism; N-acetylneuraminate degradation; D-fructose 6-phosphate from N-acetylneuraminate: step 5/5. Allosterically activated by N-acetylglucosamine 6-phosphate (GlcNAc6P). Functionally, catalyzes the reversible isomerization-deamination of glucosamine 6-phosphate (GlcN6P) to form fructose 6-phosphate (Fru6P) and ammonium ion. The protein is Glucosamine-6-phosphate deaminase of Shigella boydii serotype 18 (strain CDC 3083-94 / BS512).